The chain runs to 591 residues: Splicing factor U2af large subunit A (591 aa).

Positions 1–215 (MAEHDAPPES…QSKRMSGFDQ (215 aa)) are disordered. A compositionally biased stretch (polar residues) spans 27–36 (SPQQDAQPLS). Basic and acidic residues-rich tracts occupy residues 37 to 79 (SRDR…SRDR) and 157 to 191 (RERS…DRDG). RRM domains follow at residues 272–355 (RRVY…RPTD) and 392–470 (DRIF…RANQ).

It belongs to the splicing factor SR family.

The protein resides in the nucleus. In terms of biological role, necessary for the splicing of pre-mRNA. The polypeptide is Splicing factor U2af large subunit A (U2AF65A) (Triticum aestivum (Wheat)).